The chain runs to 687 residues: Sphingoid long chain base kinase 5 (687 aa).

A disordered region spans residues 1–20 (MTLKPSKRRKGRSRHSRKKQ). 2 S-palmitoyl cysteine; by AKR1 lipidation sites follow: Cys91 and Cys94. The segment covering 101–116 (IDRSETSTTDTSKDDL) has biased composition (basic and acidic residues). 2 disordered regions span residues 101–130 (IDRS…VNGQ) and 180–207 (DELE…SLLT). Residues 193–207 (NSLSRGSNSSSSLLT) show a composition bias toward low complexity. The DAGKc domain occupies 266 to 405 (RRNKSIFVII…IDLMCCSQPS (140 aa)). ATP contacts are provided by residues 276–278 (NPF) and Thr308. 333–336 (SGDG) serves as a coordination point for substrate. The active-site Proton donor/acceptor is the Asp335. ATP contacts are provided by residues Glu340, 366–368 (GSG), Arg434, and Arg440. Over residues 506-524 (EYETENEDEDEDADADDED) the composition is skewed to acidic residues. The segment at 506-525 (EYETENEDEDEDADADDEDS) is disordered. ATP is bound at residue 652 to 654 (DGE).

It localises to the golgi apparatus membrane. The catalysed reaction is (4R)-hydroxysphinganine + ATP = (4R)-hydroxysphinganine 1-phosphate + ADP + H(+). It catalyses the reaction a sphingoid base + ATP = a sphingoid 1-phosphate + ADP + H(+). It carries out the reaction sphinganine + ATP = sphinganine 1-phosphate + ADP + H(+). Functionally, catalyzes the phosphorylation of the sphingoid long chain bases dihydrosphingosine (DHS or sphinganine) and phytosphingosine (PHS) to form dihydrosphingosine 1-phosphate (DHS-1P) and phytosphingosine 1-phosphate (PHS-1P) respectively. Redundant to LCB4, is only responsible for few percent of the total activity. Involved in the biosynthesis of sphingolipids and ceramides. Involved in heat-induced transient cell cycle arrest. Accumulation of phosphorylated sphingoid long chain bases (LCBPs) stimulates calcium influx and activates calcineurin signaling. Involved in heat-stress resistance. This is Sphingoid long chain base kinase 5 (LCB5) from Saccharomyces cerevisiae (strain ATCC 204508 / S288c) (Baker's yeast).